We begin with the raw amino-acid sequence, 167 residues long: Lipoprotein signal peptidase (167 aa).

Transmembrane regions (helical) follow at residues 8 to 28 (TFLT…VVLL), 46 to 66 (WGHF…FGLF), 68 to 88 (QYKI…ALFL), and 101 to 121 (VALT…LLYG). Catalysis depends on residues Asp125 and Asp143. Residues 139–159 (FNLADAFISIGTLLLIGHLYF) traverse the membrane as a helical segment.

Belongs to the peptidase A8 family.

The protein localises to the cell inner membrane. It catalyses the reaction Release of signal peptides from bacterial membrane prolipoproteins. Hydrolyzes -Xaa-Yaa-Zaa-|-(S,diacylglyceryl)Cys-, in which Xaa is hydrophobic (preferably Leu), and Yaa (Ala or Ser) and Zaa (Gly or Ala) have small, neutral side chains.. Its pathway is protein modification; lipoprotein biosynthesis (signal peptide cleavage). This protein specifically catalyzes the removal of signal peptides from prolipoproteins. The polypeptide is Lipoprotein signal peptidase (Chlamydia trachomatis serovar A (strain ATCC VR-571B / DSM 19440 / HAR-13)).